The primary structure comprises 62 residues: MGMRMMFTVFLLVVLAITVVSFPLDRESDGANAEARTHDHEKHALDRNGCCRNPACESHRCG.

A signal peptide spans 1–21 (MGMRMMFTVFLLVVLAITVVS). A propeptide spanning residues 22–48 (FPLDRESDGANAEARTHDHEKHALDRN) is cleaved from the precursor. Intrachain disulfides connect Cys50–Cys56 and Cys51–Cys61. At Cys61 the chain carries Cysteine amide.

The protein belongs to the conotoxin A superfamily. In terms of tissue distribution, expressed by the venom duct.

The protein localises to the secreted. Alpha-conotoxins act on postsynaptic membranes, they bind to the nicotinic acetylcholine receptors (nAChR) and thus inhibit them. This Conus striatus (Striated cone) protein is Alpha-conotoxin-like S1.1.